We begin with the raw amino-acid sequence, 513 residues long: ATP synthase subunit alpha (513 aa).

169 to 176 provides a ligand contact to ATP; that stretch reads GDRQTGKT.

The protein belongs to the ATPase alpha/beta chains family. As to quaternary structure, F-type ATPases have 2 components, CF(1) - the catalytic core - and CF(0) - the membrane proton channel. CF(1) has five subunits: alpha(3), beta(3), gamma(1), delta(1), epsilon(1). CF(0) has three main subunits: a(1), b(2) and c(9-12). The alpha and beta chains form an alternating ring which encloses part of the gamma chain. CF(1) is attached to CF(0) by a central stalk formed by the gamma and epsilon chains, while a peripheral stalk is formed by the delta and b chains.

The protein localises to the cell inner membrane. It catalyses the reaction ATP + H2O + 4 H(+)(in) = ADP + phosphate + 5 H(+)(out). Its function is as follows. Produces ATP from ADP in the presence of a proton gradient across the membrane. The alpha chain is a regulatory subunit. In Shewanella oneidensis (strain ATCC 700550 / JCM 31522 / CIP 106686 / LMG 19005 / NCIMB 14063 / MR-1), this protein is ATP synthase subunit alpha.